The chain runs to 382 residues: Type 2 DNA topoisomerase 6 subunit A (382 aa).

A Topo IIA-type catalytic domain is found at tyrosine 14–tyrosine 155. Tyrosine 108 serves as the catalytic O-(5'-phospho-DNA)-tyrosine intermediate. Residues glutamate 202 and aspartate 254 each coordinate Mg(2+).

Belongs to the TOP6A family. As to quaternary structure, homodimer. Heterotetramer of two Top6A and two Top6B chains. Mg(2+) is required as a cofactor.

It catalyses the reaction ATP-dependent breakage, passage and rejoining of double-stranded DNA.. Relaxes both positive and negative superturns and exhibits a strong decatenase activity. The sequence is that of Type 2 DNA topoisomerase 6 subunit A from Pyrococcus horikoshii (strain ATCC 700860 / DSM 12428 / JCM 9974 / NBRC 100139 / OT-3).